Here is a 51-residue protein sequence, read N- to C-terminus: LVNQHLCGSHLVEALYLVCGERGFFYTPKAGIVEQCCNSICSLYQLETYCN.

Cystine bridges form between Cys7–Cys37, Cys19–Cys50, and Cys36–Cys41.

Belongs to the insulin family. Heterodimer of a B chain and an A chain linked by two disulfide bonds.

Its subcellular location is the secreted. In terms of biological role, insulin decreases blood glucose concentration. It increases cell permeability to monosaccharides, amino acids and fatty acids. It accelerates glycolysis, the pentose phosphate cycle, and glycogen synthesis in liver. In Didelphis virginiana (North American opossum), this protein is Insulin (INS).